The primary structure comprises 705 residues: Phosphoribosylformylglycinamidine synthase subunit PurL (705 aa).

H32 is a catalytic residue. Y35 lines the ATP pocket. E76 is a binding site for Mg(2+). Residues 77–80 (SHNH) and R99 each bind substrate. H78 serves as the catalytic Proton acceptor. D100 contacts Mg(2+). Position 224 (Q224) interacts with substrate. D252 lines the Mg(2+) pocket. 296–298 (ESQ) is a binding site for substrate. ATP-binding residues include D471 and G508. A Mg(2+)-binding site is contributed by N509. S511 is a binding site for substrate.

The protein belongs to the FGAMS family. In terms of assembly, monomer. Part of the FGAM synthase complex composed of 1 PurL, 1 PurQ and 2 PurS subunits.

Its subcellular location is the cytoplasm. It catalyses the reaction N(2)-formyl-N(1)-(5-phospho-beta-D-ribosyl)glycinamide + L-glutamine + ATP + H2O = 2-formamido-N(1)-(5-O-phospho-beta-D-ribosyl)acetamidine + L-glutamate + ADP + phosphate + H(+). It functions in the pathway purine metabolism; IMP biosynthesis via de novo pathway; 5-amino-1-(5-phospho-D-ribosyl)imidazole from N(2)-formyl-N(1)-(5-phospho-D-ribosyl)glycinamide: step 1/2. Its function is as follows. Part of the phosphoribosylformylglycinamidine synthase complex involved in the purines biosynthetic pathway. Catalyzes the ATP-dependent conversion of formylglycinamide ribonucleotide (FGAR) and glutamine to yield formylglycinamidine ribonucleotide (FGAM) and glutamate. The FGAM synthase complex is composed of three subunits. PurQ produces an ammonia molecule by converting glutamine to glutamate. PurL transfers the ammonia molecule to FGAR to form FGAM in an ATP-dependent manner. PurS interacts with PurQ and PurL and is thought to assist in the transfer of the ammonia molecule from PurQ to PurL. The chain is Phosphoribosylformylglycinamidine synthase subunit PurL from Pyrococcus horikoshii (strain ATCC 700860 / DSM 12428 / JCM 9974 / NBRC 100139 / OT-3).